The following is a 326-amino-acid chain: tRNA-modifying protein YgfZ (326 aa).

Residues tryptophan 27 and tryptophan 189 each coordinate folate.

It belongs to the tRNA-modifying YgfZ family.

It localises to the cytoplasm. Its function is as follows. Folate-binding protein involved in regulating the level of ATP-DnaA and in the modification of some tRNAs. It is probably a key factor in regulatory networks that act via tRNA modification, such as initiation of chromosomal replication. In Escherichia coli O45:K1 (strain S88 / ExPEC), this protein is tRNA-modifying protein YgfZ.